We begin with the raw amino-acid sequence, 361 residues long: Histidinol-phosphate aminotransferase (361 aa).

The residue at position 219 (Lys-219) is an N6-(pyridoxal phosphate)lysine.

This sequence belongs to the class-II pyridoxal-phosphate-dependent aminotransferase family. Histidinol-phosphate aminotransferase subfamily. In terms of assembly, homodimer. Pyridoxal 5'-phosphate serves as cofactor.

It carries out the reaction L-histidinol phosphate + 2-oxoglutarate = 3-(imidazol-4-yl)-2-oxopropyl phosphate + L-glutamate. The protein operates within amino-acid biosynthesis; L-histidine biosynthesis; L-histidine from 5-phospho-alpha-D-ribose 1-diphosphate: step 7/9. This is Histidinol-phosphate aminotransferase from Acinetobacter baumannii (strain ACICU).